Reading from the N-terminus, the 208-residue chain is MSMGPISELLTVSYPIAETFHSLQGEGAWAGGNAFFIRLGGCDVHCPWCDQKETWPTQHHPRQTVTELVQQAVTAKPSFVVITGGEPLMHDLQPLCKTLKNQGLRLHLETSGAYPLTGQFDWITLSPKPYKLPQAAIYPLANELKVIISQDEDFDWAEMEARKISPGTPLYLQAEWETEAMNEKIFAYILTHSQWRLSLQTHKYLGVR.

Substrate-binding positions include 23–25 (LQG) and R38. The Radical SAM core domain occupies 29–208 (WAGGNAFFIR…LQTHKYLGVR (180 aa)). [4Fe-4S] cluster-binding residues include C42, C46, and C49. Substrate is bound at residue T83. S-adenosyl-L-methionine contacts are provided by residues G85 and 126-128 (SPK).

The protein belongs to the radical SAM superfamily. 7-carboxy-7-deazaguanine synthase family. As to quaternary structure, homodimer. The cofactor is [4Fe-4S] cluster. S-adenosyl-L-methionine serves as cofactor. Requires Mg(2+) as cofactor.

It carries out the reaction 6-carboxy-5,6,7,8-tetrahydropterin + H(+) = 7-carboxy-7-deazaguanine + NH4(+). Its pathway is purine metabolism; 7-cyano-7-deazaguanine biosynthesis. Its function is as follows. Catalyzes the complex heterocyclic radical-mediated conversion of 6-carboxy-5,6,7,8-tetrahydropterin (CPH4) to 7-carboxy-7-deazaguanine (CDG), a step common to the biosynthetic pathways of all 7-deazapurine-containing compounds. The polypeptide is 7-carboxy-7-deazaguanine synthase (Synechocystis sp. (strain ATCC 27184 / PCC 6803 / Kazusa)).